Consider the following 314-residue polypeptide: Probable phytol kinase 1, chloroplastic (314 aa).

Residues 1–62 (MAAAARPVDV…GVGAAAAPAV (62 aa)) constitute a chloroplast transit peptide. 7 helical membrane-spanning segments follow: residues 72-91 (AALR…YSLV), 111-131 (IVHV…SNST), 135-155 (FFAA…GLRL), 181-201 (YVIV…IGIV), 234-254 (IGSI…LFYF), 266-286 (LALG…CIPV), and 294-314 (ISVP…SSCC).

This sequence belongs to the polyprenol kinase family.

It localises to the plastid. The protein localises to the chloroplast membrane. The enzyme catalyses phytol + CTP = phytyl phosphate + CDP + H(+). Its pathway is cofactor biosynthesis; tocopherol biosynthesis. Its function is as follows. Involved in the activation and reutilization of phytol from chlorophyll degradation in plant metabolism, including tocopherol biosynthesis. Catalyzes the conversion of phytol to phytol monophosphate (PMP). This chain is Probable phytol kinase 1, chloroplastic, found in Oryza sativa subsp. japonica (Rice).